We begin with the raw amino-acid sequence, 78 residues long: DNA-directed RNA polymerase subunit Rpo5 (78 aa).

It belongs to the archaeal Rpo5/eukaryotic RPB5 RNA polymerase subunit family. Part of the RNA polymerase complex.

Its subcellular location is the cytoplasm. It carries out the reaction RNA(n) + a ribonucleoside 5'-triphosphate = RNA(n+1) + diphosphate. Its function is as follows. DNA-dependent RNA polymerase (RNAP) catalyzes the transcription of DNA into RNA using the four ribonucleoside triphosphates as substrates. The polypeptide is DNA-directed RNA polymerase subunit Rpo5 (Methanococcus maripaludis (strain C6 / ATCC BAA-1332)).